A 131-amino-acid chain; its full sequence is Small ribosomal subunit protein uS11 (131 aa).

It belongs to the universal ribosomal protein uS11 family. Part of the 30S ribosomal subunit. Interacts with proteins S7 and S18. Binds to IF-3.

Located on the platform of the 30S subunit, it bridges several disparate RNA helices of the 16S rRNA. Forms part of the Shine-Dalgarno cleft in the 70S ribosome. The sequence is that of Small ribosomal subunit protein uS11 from Saccharophagus degradans (strain 2-40 / ATCC 43961 / DSM 17024).